A 317-amino-acid polypeptide reads, in one-letter code: Acetyl-coenzyme A carboxylase carboxyl transferase subunit alpha (317 aa).

The region spanning 40–293 is the CoA carboxyltransferase C-terminal domain; that stretch reads LEKRSADALK…GDIIAASLRS (254 aa).

Belongs to the AccA family. Acetyl-CoA carboxylase is a heterohexamer composed of biotin carboxyl carrier protein (AccB), biotin carboxylase (AccC) and two subunits each of ACCase subunit alpha (AccA) and ACCase subunit beta (AccD).

It is found in the cytoplasm. It carries out the reaction N(6)-carboxybiotinyl-L-lysyl-[protein] + acetyl-CoA = N(6)-biotinyl-L-lysyl-[protein] + malonyl-CoA. Its pathway is lipid metabolism; malonyl-CoA biosynthesis; malonyl-CoA from acetyl-CoA: step 1/1. Functionally, component of the acetyl coenzyme A carboxylase (ACC) complex. First, biotin carboxylase catalyzes the carboxylation of biotin on its carrier protein (BCCP) and then the CO(2) group is transferred by the carboxyltransferase to acetyl-CoA to form malonyl-CoA. The protein is Acetyl-coenzyme A carboxylase carboxyl transferase subunit alpha of Brucella abortus (strain S19).